A 122-amino-acid polypeptide reads, in one-letter code: Large ribosomal subunit protein uL14 (122 aa).

Belongs to the universal ribosomal protein uL14 family. Part of the 50S ribosomal subunit. Forms a cluster with proteins L3 and L19. In the 70S ribosome, L14 and L19 interact and together make contacts with the 16S rRNA in bridges B5 and B8.

Binds to 23S rRNA. Forms part of two intersubunit bridges in the 70S ribosome. This Moorella thermoacetica (strain ATCC 39073 / JCM 9320) protein is Large ribosomal subunit protein uL14.